A 484-amino-acid polypeptide reads, in one-letter code: MTITAPPKDEIISKFPGSEPLLNFYNELSDAEKSKLFHQISTLNLSEAHQWFIDSADQRAPSTAEDLKPVLDSQHFVQAELHQVILDGLWNKGMDAIGRGEVCAIVLAGGQATRLGSSQPKGTIPLGINASFGDSLLGIQAAKIALLQALAGEREHQNPGKIHWAVMTSPGTEEATREHVKKLAAHHGFDFDEQITIFSQDEIAAYDEQGNFLLGTKGSVVAAPNGNGGLYSAISAHLPRLRAKGIKYFHVYCVDNILCKVADPHFIGFAISNEADVATKCVPKQKGELVGSVCLDRGLPRVVEYSELGAELAEQKTPDGKYLFGAGSIANHFFTMDFMDRVCSPSSRLPYHRAHKKISYVNEQGTIVKPEKPNGIKLEQFIFDVFELSKRFFIWEVARNEEFSPLKNAQSVGTDCLSTCQRDLSNVNKLWLERVQAKVTATEKPIYLKTIVSYNGENLQELRHREISDSALESDHSINKFFVV.

Residues 107 to 110 carry the Substrate binding motif; the sequence is LAGG. UTP-binding positions include 107-110, Lys121, Gln200, and Gly226; that span reads LAGG. Residue Asn227 coordinates substrate. Asp255 serves as a coordination point for UTP. The Substrate binding motif lies at 304-305; the sequence is EY. Lys377 is a UTP binding site. Lys407 provides a ligand contact to substrate.

The protein belongs to the UDPGP type 1 family.

Its subcellular location is the cytoplasm. The enzyme catalyses N-acetyl-alpha-D-glucosamine 1-phosphate + UTP + H(+) = UDP-N-acetyl-alpha-D-glucosamine + diphosphate. Its pathway is nucleotide-sugar biosynthesis; UDP-N-acetyl-alpha-D-glucosamine biosynthesis; UDP-N-acetyl-alpha-D-glucosamine from N-acetyl-alpha-D-glucosamine 1-phosphate: step 1/1. This chain is Probable UDP-N-acetylglucosamine pyrophosphorylase, found in Caenorhabditis elegans.